The sequence spans 255 residues: Type III pantothenate kinase (255 aa).

6–13 (DVGNSYTM) contributes to the ATP binding site. A substrate-binding site is contributed by 107–110 (GADR). Residue Asp-109 is the Proton acceptor of the active site. Asp-129 is a binding site for K(+). ATP is bound at residue Thr-132. Thr-183 is a binding site for substrate.

Belongs to the type III pantothenate kinase family. As to quaternary structure, homodimer. The cofactor is NH4(+). K(+) serves as cofactor.

The protein resides in the cytoplasm. It catalyses the reaction (R)-pantothenate + ATP = (R)-4'-phosphopantothenate + ADP + H(+). It functions in the pathway cofactor biosynthesis; coenzyme A biosynthesis; CoA from (R)-pantothenate: step 1/5. Its function is as follows. Catalyzes the phosphorylation of pantothenate (Pan), the first step in CoA biosynthesis. This is Type III pantothenate kinase from Petrotoga mobilis (strain DSM 10674 / SJ95).